We begin with the raw amino-acid sequence, 189 residues long: Interleukin-23 subunit alpha (189 aa).

A signal peptide spans 1–19; the sequence is MLGSTAVMLLLLLPWTAQT.

Belongs to the IL-6 superfamily. Heterodimer with IL12B; disulfide-linked. The heterodimer is known as interleukin IL-23. Interacts with IL23R; this interaction enables recruitment of IL12RB1.

It is found in the secreted. Functionally, associates with IL12B to form the pro-inflammatory cytokine IL-23 that plays different roles in innate and adaptive immunity. Released by antigen-presenting cells such as dendritic cells or macrophages, binds to a heterodimeric receptor complex composed of IL12RB1 and IL23R to activate JAK2 and TYK2 which then phosphorylate the receptor to form a docking site leading to the phosphorylation of STAT3 and STAT4. This process leads to activation of several pathways including p38 MAPK or NF-kappa-B and promotes the production of pro-inflammatory cytokines such as interleukin-17A/IL17A. In turn, participates in the early and effective intracellular bacterial clearance. Promotes the expansion and survival of T-helper 17 cells, a CD4-positive helper T-cell subset that produces IL-17, as well as other IL-17-producing cells. This Cavia porcellus (Guinea pig) protein is Interleukin-23 subunit alpha (IL23A).